The primary structure comprises 1101 residues: Furin-like protease 1, isoform 1-CRR (1101 aa).

Residues 1-57 form a disordered region; it reads MKNDVVRWSRQPTSNTTNSSSSSRSDSNSTHKHRSKSNKLNARQLGSNAARSCQQRS. Over residues 13 to 28 the composition is skewed to low complexity; that stretch reads TSNTTNSSSSSRSDSN. Asn-15, Asn-18, and Asn-28 each carry an N-linked (GlcNAc...) asparagine glycan. Positions 38 to 57 are enriched in polar residues; that stretch reads NKLNARQLGSNAARSCQQRS. Asn-108 is a glycosylation site (N-linked (GlcNAc...) asparagine). The helical transmembrane segment at 119-139 threads the bilayer; it reads VFLLALQFSAVVFLCNINVGF. The span at 150-163 shows a compositional bias: low complexity; it reads SAGGSSPAAPSSAP. The tract at residues 150–187 is disordered; it reads SAGGSSPAAPSSAPSSPPTVAVPPPPPPSSALKVDPNG. The span at 164-178 shows a compositional bias: pro residues; it reads SSPPTVAVPPPPPPS. Residue Asn-333 is glycosylated (N-linked (GlcNAc...) asparagine). The Peptidase S8 domain occupies 340–654; that stretch reads MWYLNRGGGL…YGLMDAAEMV (315 aa). Catalysis depends on charge relay system residues Asp-372 and His-413. Residue Asn-426 is glycosylated (N-linked (GlcNAc...) asparagine). Intrachain disulfides connect Cys-430-Cys-579 and Cys-522-Cys-552. Ser-587 functions as the Charge relay system in the catalytic mechanism. N-linked (GlcNAc...) asparagine glycosylation is present at Asn-606. The region spanning 662–791 is the P/Homo B domain; it reads AVPEQQRCEI…DMIFYGTETP (130 aa). Cys-669 and Cys-695 form a disulfide bridge. N-linked (GlcNAc...) asparagine glycosylation is found at Asn-727 and Asn-859. Positions 886 to 915 are disordered; that stretch reads EEDEQDDEVTRGPVNPYSSSPMDHSLLMSN. The segment covering 901–915 has biased composition (polar residues); that stretch reads PYSSSPMDHSLLMSN. Asn-978 is a glycosylation site (N-linked (GlcNAc...) asparagine). The chain crosses the membrane as a helical span at residues 1014 to 1034; the sequence is TVLLLVSVIFTLMGVAVAGGI.

It belongs to the peptidase S8 family. Furin subfamily. The cofactor is Ca(2+). As to expression, in adults, isoform 1-CRR is expressed in CNS, fat body, and female reproductive tissues, and in embryos, in anal pads, hindgut, developing antennomaxillary complex, oenocytes, clipeolabrum, pharynx, trachea, CNS and developing posterior spiracles.

It localises to the golgi apparatus membrane. The enzyme catalyses Release of mature proteins from their proproteins by cleavage of -Arg-Xaa-Yaa-Arg-|-Zaa- bonds, where Xaa can be any amino acid and Yaa is Arg or Lys. Releases albumin, complement component C3 and von Willebrand factor from their respective precursors.. Functionally, furin is likely to represent the ubiquitous endoprotease activity within constitutive secretory pathways and capable of cleavage at the RX(K/R)R consensus motif. The polypeptide is Furin-like protease 1, isoform 1-CRR (Fur1) (Drosophila melanogaster (Fruit fly)).